We begin with the raw amino-acid sequence, 302 residues long: tRNA pseudouridine synthase B (302 aa).

Asp45 serves as the catalytic Nucleophile.

Belongs to the pseudouridine synthase TruB family. Type 1 subfamily.

The enzyme catalyses uridine(55) in tRNA = pseudouridine(55) in tRNA. Functionally, responsible for synthesis of pseudouridine from uracil-55 in the psi GC loop of transfer RNAs. This chain is tRNA pseudouridine synthase B, found in Francisella philomiragia subsp. philomiragia (strain ATCC 25017 / CCUG 19701 / FSC 153 / O#319-036).